A 196-amino-acid polypeptide reads, in one-letter code: Translation machinery-associated protein 22 (196 aa).

Residues 97 to 168 enclose the SUI1 domain; that stretch reads VIVKREARTK…EVVAYIHSLL (72 aa).

It belongs to the DENR family. As to quaternary structure, interacts with the 40S ribosomal subunit.

Its subcellular location is the cytoplasm. This is Translation machinery-associated protein 22 (TMA22) from Candida glabrata (strain ATCC 2001 / BCRC 20586 / JCM 3761 / NBRC 0622 / NRRL Y-65 / CBS 138) (Yeast).